Here is a 155-residue protein sequence, read N- to C-terminus: Small ribosomal subunit protein uS7cz/uS7cy (155 aa).

Belongs to the universal ribosomal protein uS7 family. In terms of assembly, part of the 30S ribosomal subunit.

It localises to the plastid. It is found in the chloroplast. Functionally, one of the primary rRNA binding proteins, it binds directly to 16S rRNA where it nucleates assembly of the head domain of the 30S subunit. The chain is Small ribosomal subunit protein uS7cz/uS7cy (rps7-A) from Nymphaea alba (White water-lily).